The primary structure comprises 1037 residues: Caspase recruitment domain-containing protein 6 (1037 aa).

Residue Ala2 is modified to N-acetylalanine. Residues 3 to 94 enclose the CARD domain; sequence TESTPSEIIE…QSAAICGLRH (92 aa). A Phosphoserine modification is found at Ser154. 3 disordered regions span residues 235 to 270, 669 to 704, and 887 to 1037; these read DPEH…TSLS, VSSG…PIQE, and RTSH…GGKH. Residues 242–261 are compositionally biased toward acidic residues; that stretch reads DGEEDFENSETTEFSGEEPS. A compositionally biased stretch (low complexity) spans 690-699; the sequence is LKSSSKSQAL. Polar residues-rich tracts occupy residues 911-928, 938-954, and 963-984; these read ASQQ…SNPA, KSSQ…TVKH, and VPSQ…QTKP. Ser985 is subject to Phosphoserine. Over residues 994 to 1012 the composition is skewed to pro residues; the sequence is PSQPWPPQSKPSQPRPPQP. Residues 1023–1037 show a composition bias toward basic residues; it reads KAHHSKAGQKRGGKH.

Its function is as follows. May be involved in apoptosis. This chain is Caspase recruitment domain-containing protein 6 (CARD6), found in Homo sapiens (Human).